Here is a 276-residue protein sequence, read N- to C-terminus: Glutamate racemase (276 aa).

Substrate contacts are provided by residues aspartate 10–serine 11 and tyrosine 42–glycine 43. Cysteine 74 serves as the catalytic Proton donor/acceptor. Asparagine 75–threonine 76 provides a ligand contact to substrate. The active-site Proton donor/acceptor is cysteine 185. Residue threonine 186 to histidine 187 coordinates substrate.

This sequence belongs to the aspartate/glutamate racemases family.

It catalyses the reaction L-glutamate = D-glutamate. It participates in cell wall biogenesis; peptidoglycan biosynthesis. In terms of biological role, provides the (R)-glutamate required for cell wall biosynthesis. This chain is Glutamate racemase, found in Levilactobacillus brevis (strain ATCC 367 / BCRC 12310 / CIP 105137 / JCM 1170 / LMG 11437 / NCIMB 947 / NCTC 947) (Lactobacillus brevis).